The sequence spans 231 residues: Flagellar L-ring protein 2 (231 aa).

Residues M1 to G15 form the signal peptide. C16 carries N-palmitoyl cysteine lipidation. C16 carries S-diacylglycerol cysteine lipidation. The interval S30–S54 is disordered.

It belongs to the FlgH family. In terms of assembly, the basal body constitutes a major portion of the flagellar organelle and consists of four rings (L,P,S, and M) mounted on a central rod.

The protein localises to the cell outer membrane. The protein resides in the bacterial flagellum basal body. Its function is as follows. Assembles around the rod to form the L-ring and probably protects the motor/basal body from shearing forces during rotation. The sequence is that of Flagellar L-ring protein 2 from Bradyrhizobium diazoefficiens (strain JCM 10833 / BCRC 13528 / IAM 13628 / NBRC 14792 / USDA 110).